A 473-amino-acid polypeptide reads, in one-letter code: Photosystem II CP43 reaction center protein (473 aa).

The propeptide occupies 1-14 (MKTLYSLRRFYHVE). Position 15 is an N-acetylthreonine (T15). T15 carries the post-translational modification Phosphothreonine. 5 helical membrane passes run 69 to 93 (LFEVAHFVPEKPMYEQGLILLPHLA), 134 to 155 (LLGPETLEESFPFFGYVWKDRN), 178 to 200 (KALYFGGVYDTWAPGGGDVRKIT), 255 to 275 (KPFAWARRALVWSGEAYLSYS), and 291 to 312 (WFNNTAYPSEFYGPTGPEASQA). E367 provides a ligand contact to [CaMn4O5] cluster. A helical transmembrane segment spans residues 447–471 (RARAAAAGFEKGIDRDFEPVLSMTP).

Belongs to the PsbB/PsbC family. PsbC subfamily. As to quaternary structure, PSII is composed of 1 copy each of membrane proteins PsbA, PsbB, PsbC, PsbD, PsbE, PsbF, PsbH, PsbI, PsbJ, PsbK, PsbL, PsbM, PsbT, PsbX, PsbY, PsbZ, Psb30/Ycf12, at least 3 peripheral proteins of the oxygen-evolving complex and a large number of cofactors. It forms dimeric complexes. Requires Binds multiple chlorophylls and provides some of the ligands for the Ca-4Mn-5O cluster of the oxygen-evolving complex. It may also provide a ligand for a Cl- that is required for oxygen evolution. PSII binds additional chlorophylls, carotenoids and specific lipids. as cofactor.

It is found in the plastid. The protein resides in the chloroplast thylakoid membrane. Its function is as follows. One of the components of the core complex of photosystem II (PSII). It binds chlorophyll and helps catalyze the primary light-induced photochemical processes of PSII. PSII is a light-driven water:plastoquinone oxidoreductase, using light energy to abstract electrons from H(2)O, generating O(2) and a proton gradient subsequently used for ATP formation. The protein is Photosystem II CP43 reaction center protein of Nicotiana tabacum (Common tobacco).